A 201-amino-acid chain; its full sequence is MQAFTTHTGLAVAIDSANIDTDQIIPKQFLSKVTKDGFGIHLFHDWRYLDDAGDIPNPEFNLNKPRYKGATILLAQENFGCGSSREHAPWALADFGLRAIIAPTFADIFYGNAINNGLLPVRLPEAAVRQLMDEVEANEGAEVTVDLENLKVVSPSGAEFSFTLAESARQNLLKGLDAIGLTLAHEAAISEYESRIPAWRR.

This sequence belongs to the LeuD family. LeuD type 1 subfamily. As to quaternary structure, heterodimer of LeuC and LeuD.

It carries out the reaction (2R,3S)-3-isopropylmalate = (2S)-2-isopropylmalate. The protein operates within amino-acid biosynthesis; L-leucine biosynthesis; L-leucine from 3-methyl-2-oxobutanoate: step 2/4. Catalyzes the isomerization between 2-isopropylmalate and 3-isopropylmalate, via the formation of 2-isopropylmaleate. This chain is 3-isopropylmalate dehydratase small subunit, found in Shewanella amazonensis (strain ATCC BAA-1098 / SB2B).